The primary structure comprises 348 residues: Dehydrogenase orsE (348 aa).

43-46 contributes to the NADP(+) binding site; it reads LDTH. A substrate-binding site is contributed by 130–137; sequence FAVEAAVC. NADP(+) contacts are provided by residues 180 to 183, 203 to 206, and 272 to 273; these read SSSV, GAHN, and VH. 292 to 296 contributes to the substrate binding site; sequence NDIAT. 339-340 is an NADP(+) binding site; sequence VS.

It belongs to the zinc-containing alcohol dehydrogenase family. Monomer.

In terms of biological role, dehydrogenase; part of the gene cluster that mediates the biosynthesis of orsellinic acid, as well as of the cathepsin K inhibitors F9775 A and F9775 B. The non-reducing polyketide synthase orsA produces orsellinic acid by condensing acetyl-CoA with 3 malonyl-CoA units. Further modifications by the decarboxylase orsB and the tyrosinase-like protein orsC lead to the production of F9775 A and F9775 B. The functions of orsD and orsE remain unclear since only orsB and orsC are required to convert orsellinic acid into F9775 A and F9775 B. The polypeptide is Dehydrogenase orsE (Emericella nidulans (strain FGSC A4 / ATCC 38163 / CBS 112.46 / NRRL 194 / M139) (Aspergillus nidulans)).